The following is a 133-amino-acid chain: ATP synthase epsilon chain (133 aa).

This sequence belongs to the ATPase epsilon chain family. In terms of assembly, F-type ATPases have 2 components, CF(1) - the catalytic core - and CF(0) - the membrane proton channel. CF(1) has five subunits: alpha(3), beta(3), gamma(1), delta(1), epsilon(1). CF(0) has three main subunits: a, b and c.

The protein localises to the cellular thylakoid membrane. In terms of biological role, produces ATP from ADP in the presence of a proton gradient across the membrane. This is ATP synthase epsilon chain from Prochlorococcus marinus (strain MIT 9303).